Here is a 66-residue protein sequence, read N- to C-terminus: UPF0337 protein BT9727_0908 (66 aa).

A disordered region spans residues 1–22; the sequence is MSENGLKEQITGKVEKTKGQVK. The segment covering 13 to 22 has biased composition (basic and acidic residues); the sequence is KVEKTKGQVK.

It belongs to the UPF0337 (CsbD) family.

The polypeptide is UPF0337 protein BT9727_0908 (Bacillus thuringiensis subsp. konkukian (strain 97-27)).